The sequence spans 105 residues: Protein ORFg in retron Ec67 (105 aa).

This Escherichia coli protein is Protein ORFg in retron Ec67.